Reading from the N-terminus, the 307-residue chain is MTITNGKVSLKHLVTMETLSNEEVLGLIQRGIAFKRGEKVELDRKYYASNLFFEDSTRTHKSFEMAELRLDMGMIDFDARTSSVNKGETLCDTILTMSALGVDICVIRHSEVDYYKQLIDSPTIQTSIVNGGDGSGQHPSQSLLDLMTIYEEFGTFDGLKIAIAGDITHSRVAKSNMQILKRLGAEIFFAGPEEWYAEEFDVYGQHLNIDDIVETVDVLMLLRVQHERHDGDGGFSKETYNRLHGLTEERYKRLKDTAIVMHPAPVNRDVEIDDSLVEAPKSRIVRQMQNGVFVRMAILEAIVNGKA.

Carbamoyl phosphate-binding residues include Arg-58 and Thr-59. Lys-86 is a binding site for L-aspartate. Positions 108, 138, and 141 each coordinate carbamoyl phosphate. L-aspartate contacts are provided by Arg-171 and Arg-223. Carbamoyl phosphate-binding residues include Ala-264 and Pro-265.

It belongs to the aspartate/ornithine carbamoyltransferase superfamily. ATCase family. In terms of assembly, heterododecamer (2C3:3R2) of six catalytic PyrB chains organized as two trimers (C3), and six regulatory PyrI chains organized as three dimers (R2).

It carries out the reaction carbamoyl phosphate + L-aspartate = N-carbamoyl-L-aspartate + phosphate + H(+). Its pathway is pyrimidine metabolism; UMP biosynthesis via de novo pathway; (S)-dihydroorotate from bicarbonate: step 2/3. Its function is as follows. Catalyzes the condensation of carbamoyl phosphate and aspartate to form carbamoyl aspartate and inorganic phosphate, the committed step in the de novo pyrimidine nucleotide biosynthesis pathway. In Streptococcus suis (strain 98HAH33), this protein is Aspartate carbamoyltransferase catalytic subunit.